Consider the following 33-residue polypeptide: GLLDSLKNLAINAAKGAGQSVLNTLSCKLSKTC.

Cys27 and Cys33 are disulfide-bonded.

In terms of tissue distribution, expressed by the skin glands.

Its subcellular location is the secreted. Functionally, has antibacterial activity against the Gram-positive bacterium S.aureus ATCC 25923 (MIC=18 uM) and the Gram-negative bacterium E.coli ATCC 25726 (MIC=36 uM). The sequence is that of Brevinin-2HSa from Odorrana hosii (Hose's rock frog).